Here is a 139-residue protein sequence, read N- to C-terminus: MLRTMMKSKIHRATVTHADLHYVGSVTVDQDLLDAADLLEGEQVCIVDIDNGARLETYVIAGERGSGVIGINGAAAHLVHPGDLVILIAYGMMNEQEIAEYDPKVVFVDERNRPVELGSDPAHAPEGSGLTSPRSLTFA.

The active-site Schiff-base intermediate with substrate; via pyruvic acid is the serine 25. Serine 25 is subject to Pyruvic acid (Ser). Threonine 57 lines the substrate pocket. Catalysis depends on tyrosine 58, which acts as the Proton donor. Position 73-75 (73-75) interacts with substrate; it reads GAA. The interval 116–139 is disordered; it reads ELGSDPAHAPEGSGLTSPRSLTFA. The segment covering 129–139 has biased composition (polar residues); that stretch reads GLTSPRSLTFA.

Belongs to the PanD family. In terms of assembly, heterooctamer of four alpha and four beta subunits. Pyruvate serves as cofactor. Is synthesized initially as an inactive proenzyme, which is activated by self-cleavage at a specific serine bond to produce a beta-subunit with a hydroxyl group at its C-terminus and an alpha-subunit with a pyruvoyl group at its N-terminus.

The protein localises to the cytoplasm. The catalysed reaction is L-aspartate + H(+) = beta-alanine + CO2. Its pathway is cofactor biosynthesis; (R)-pantothenate biosynthesis; beta-alanine from L-aspartate: step 1/1. Catalyzes the pyruvoyl-dependent decarboxylation of aspartate to produce beta-alanine. The sequence is that of Aspartate 1-decarboxylase from Nocardia farcinica (strain IFM 10152).